We begin with the raw amino-acid sequence, 492 residues long: Catalase isozyme 2 (492 aa).

Active-site residues include H65 and N138. Y348 is a heme binding site.

The protein belongs to the catalase family. In terms of assembly, homotetramer. Heme is required as a cofactor.

Its subcellular location is the peroxisome. It carries out the reaction 2 H2O2 = O2 + 2 H2O. Its function is as follows. Occurs in almost all aerobically respiring organisms and serves to protect cells from the toxic effects of hydrogen peroxide. The protein is Catalase isozyme 2 (CAT2) of Gossypium hirsutum (Upland cotton).